Consider the following 415-residue polypeptide: MIFDKEDFESFDPELWAAIHAEEIRQQQNIELIASENIVSKAVMAAQGSVLTNKYAEGYPGKRYYGGTEAVDVVENLAIERAKELFGAKFANVQPHSGSQANAAAYMALIQPGDTVLGMDLNAGGHLTHGASVNFSGKTYHFVPYGVNSETELLDYDEILKIAKQVQPKLIVAGASAYSRLIDFAKFREIADSVGAKLMVDMAHIAGLVATGAHPNPLPYADVVTTTTHKTLRGPRGGMILTNDEALAKKINSAIFPGTQGGPLEHVIAAKAVAFKEALDPEFTTYIEQVIKNTQAMAEEFAKVEGLRLIAGGSDNHLLNLKVLDLGINGKEAQDLLDSVHITLNKEAIPDETLSPFKTSGVRIGAAAITSRGFKEVEAKKVAQLVSEALVNHDNQEKLAEVRKAALELTRQFPL.

(6S)-5,6,7,8-tetrahydrofolate-binding positions include leucine 121 and glycine 125 to leucine 127. Lysine 230 carries the N6-(pyridoxal phosphate)lysine modification. Serine 355–phenylalanine 357 is a binding site for (6S)-5,6,7,8-tetrahydrofolate.

It belongs to the SHMT family. In terms of assembly, homodimer. Requires pyridoxal 5'-phosphate as cofactor.

It is found in the cytoplasm. The enzyme catalyses (6R)-5,10-methylene-5,6,7,8-tetrahydrofolate + glycine + H2O = (6S)-5,6,7,8-tetrahydrofolate + L-serine. Its pathway is one-carbon metabolism; tetrahydrofolate interconversion. It participates in amino-acid biosynthesis; glycine biosynthesis; glycine from L-serine: step 1/1. Catalyzes the reversible interconversion of serine and glycine with tetrahydrofolate (THF) serving as the one-carbon carrier. This reaction serves as the major source of one-carbon groups required for the biosynthesis of purines, thymidylate, methionine, and other important biomolecules. Also exhibits THF-independent aldolase activity toward beta-hydroxyamino acids, producing glycine and aldehydes, via a retro-aldol mechanism. The polypeptide is Serine hydroxymethyltransferase (Lactococcus lactis subsp. lactis (strain IL1403) (Streptococcus lactis)).